Here is a 650-residue protein sequence, read N- to C-terminus: MIDIKGIRKSYQMGDTKVDVLKGISLKIERGDFVAIMGPSGSGKSTLMHILGLLDVPSEGSYNLNGREVADLSEDELAIVRREEIGFIFQQFNLLPRMEAWQNVSLPLIYSEDGFSYDKAQALLDKVGLAERIHHKSNELSGGQQQRIAIARSLINNPRIIFADEPTGNLDSKSEKEIIQILHKLNDQGITVIVVTHEEEIGQQAKRLIRLRDGVIQSDERLQALPAAPTTAQEKRQEKTAKWPVREMIEHLHQGFQTLAANKVRSGLSMLGILIGVAAVVGMLALGTGARQSIEKQLSSLGSNLLVLRAGNVRVGGVMQESGVRIRISLDDVSTIKNQISGIKDVSPSSSGRGQITYLNKNWNTQVMGVAPAYEQMRASTPIFGRFFSEEENQRRTLVAVIGTTVARELFGEKSPIGEMIKINKVNFRVIGVLPEKGAAGPQDQDDRILVPVVTAMYRLFGRNYVDSVDIEVRDAADIPEVQDSLQELMNKRHRVPVSSQGDAFNVFNMADIQQALNSTSQTLSMLLASIAAISLVVGGIGIMNIMLVSVTERTKEIGLRKAIGARRRDILLQFLAESIVVSVCGGLLGIALGVGFSLLISKVLGWSTVVSAGSVILSFGFSALIGIVFGSYPASKASKLHPIEALRYE.

The ABC transporter domain maps to 2–238 (IDIKGIRKSY…PTTAQEKRQE (237 aa)). Residue 38-45 (GPSGSGKS) participates in ATP binding. 4 helical membrane-spanning segments follow: residues 267 to 287 (GLSMLGILIGVAAVVGMLALG), 531 to 551 (IAAISLVVGGIGIMNIMLVSV), 580 to 600 (IVVSVCGGLLGIALGVGFSLL), and 610 to 630 (VVSAGSVILSFGFSALIGIVF).

Belongs to the ABC transporter superfamily. Macrolide exporter (TC 3.A.1.122) family. As to quaternary structure, homodimer.

Its subcellular location is the cell inner membrane. Its function is as follows. Non-canonical ABC transporter that contains transmembrane domains (TMD), which form a pore in the inner membrane, and an ATP-binding domain (NBD), which is responsible for energy generation. Confers resistance against macrolides. In Bdellovibrio bacteriovorus (strain ATCC 15356 / DSM 50701 / NCIMB 9529 / HD100), this protein is Macrolide export ATP-binding/permease protein MacB.